Consider the following 72-residue polypeptide: Small ribosomal subunit protein bS18 (72 aa).

It belongs to the bacterial ribosomal protein bS18 family. In terms of assembly, part of the 30S ribosomal subunit. Forms a tight heterodimer with protein bS6.

Binds as a heterodimer with protein bS6 to the central domain of the 16S rRNA, where it helps stabilize the platform of the 30S subunit. The protein is Small ribosomal subunit protein bS18 of Francisella tularensis subsp. novicida (strain U112).